A 1547-amino-acid polypeptide reads, in one-letter code: Mediator of RNA polymerase II transcription subunit 12 (1547 aa).

Disordered regions lie at residues 1–63 and 1356–1509; these read MTSR…RPHI and PVIP…QQRD. Pro residues predominate over residues 1357–1369; it reads VIPPLEPPQPPNP. Positions 1379–1390 are enriched in polar residues; that stretch reads YQSPQMTSNTAA. 2 stretches are compositionally biased toward low complexity: residues 1398–1413 and 1446–1468; these read QQQQ…QQTQ and LSPL…RASQ. 2 stretches are compositionally biased toward polar residues: residues 1469–1480 and 1499–1509; these read PSPIHSQRPTSV and AHTSYVNQQRD.

It belongs to the Mediator complex subunit 12 family. In terms of assembly, component of the SRB8-11 complex, which itself associates with the Mediator complex.

Its subcellular location is the nucleus. Its function is as follows. Component of the SRB8-11 complex. The SRB8-11 complex is a regulatory module of the Mediator complex which is itself involved in regulation of basal and activated RNA polymerase II-dependent transcription. The SRB8-11 complex may be involved in the transcriptional repression of a subset of genes regulated by Mediator. It may inhibit the association of the Mediator complex with RNA polymerase II to form the holoenzyme complex. This Phaeosphaeria nodorum (strain SN15 / ATCC MYA-4574 / FGSC 10173) (Glume blotch fungus) protein is Mediator of RNA polymerase II transcription subunit 12 (SRB8).